Here is a 444-residue protein sequence, read N- to C-terminus: Squalene synthase ERG9 (444 aa).

Residues 421–441 form a helical membrane-spanning segment; sequence FNMVLSIILSVLLGFYYIYTL.

Belongs to the phytoene/squalene synthase family. Requires Mg(2+) as cofactor.

It localises to the endoplasmic reticulum membrane. It is found in the microsome. The catalysed reaction is 2 (2E,6E)-farnesyl diphosphate + NADPH + H(+) = squalene + 2 diphosphate + NADP(+). It carries out the reaction 2 (2E,6E)-farnesyl diphosphate + NADH + H(+) = squalene + 2 diphosphate + NAD(+). It participates in terpene metabolism; lanosterol biosynthesis; lanosterol from farnesyl diphosphate: step 1/3. In terms of biological role, squalene synthase; part of the third module of ergosterol biosynthesis pathway that includes the late steps of the pathway. ERG9 produces squalene from 2 farnesyl pyrophosphate moieties. The third module or late pathway involves the ergosterol synthesis itself through consecutive reactions that mainly occur in the endoplasmic reticulum (ER) membrane. Firstly, the squalene synthase ERG9 catalyzes the condensation of 2 farnesyl pyrophosphate moieties to form squalene, which is the precursor of all steroids. Squalene synthase is crucial for balancing the incorporation of farnesyl diphosphate (FPP) into sterol and nonsterol isoprene synthesis. Secondly, the squalene epoxidase ERG1 catalyzes the stereospecific oxidation of squalene to (S)-2,3-epoxysqualene, which is considered to be a rate-limiting enzyme in steroid biosynthesis. Then, the lanosterol synthase ERG7 catalyzes the cyclization of (S)-2,3 oxidosqualene to lanosterol, a reaction that forms the sterol core. In the next steps, lanosterol is transformed to zymosterol through a complex process involving various demethylation, reduction and desaturation reactions. The lanosterol 14-alpha-demethylase ERG11 (also known as CYP51) catalyzes C14-demethylation of lanosterol to produce 4,4'-dimethyl cholesta-8,14,24-triene-3-beta-ol, which is critical for ergosterol biosynthesis. The C-14 reductase ERG24 reduces the C14=C15 double bond of 4,4-dimethyl-cholesta-8,14,24-trienol to produce 4,4-dimethyl-cholesta-8,24-dienol. 4,4-dimethyl-cholesta-8,24-dienol is substrate of the C-4 demethylation complex ERG25-ERG26-ERG27 in which ERG25 catalyzes the three-step monooxygenation required for the demethylation of 4,4-dimethyl and 4alpha-methylsterols, ERG26 catalyzes the oxidative decarboxylation that results in a reduction of the 3-beta-hydroxy group at the C-3 carbon to an oxo group, and ERG27 is responsible for the reduction of the keto group on the C-3. ERG28 has a role as a scaffold to help anchor ERG25, ERG26 and ERG27 to the endoplasmic reticulum and ERG29 regulates the activity of the iron-containing C4-methylsterol oxidase ERG25. Then, the sterol 24-C-methyltransferase ERG6 catalyzes the methyl transfer from S-adenosyl-methionine to the C-24 of zymosterol to form fecosterol. The C-8 sterol isomerase ERG2 catalyzes the reaction which results in unsaturation at C-7 in the B ring of sterols and thus converts fecosterol to episterol. The sterol-C5-desaturase ERG3 then catalyzes the introduction of a C-5 double bond in the B ring to produce 5-dehydroepisterol. The C-22 sterol desaturase ERG5 further converts 5-dehydroepisterol into ergosta-5,7,22,24(28)-tetraen-3beta-ol by forming the C-22(23) double bond in the sterol side chain. Finally, ergosta-5,7,22,24(28)-tetraen-3beta-ol is substrate of the C-24(28) sterol reductase ERG4 to produce ergosterol. In Saccharomyces cerevisiae (strain ATCC 204508 / S288c) (Baker's yeast), this protein is Squalene synthase ERG9.